Here is a 93-residue protein sequence, read N- to C-terminus: UPF0223 protein SAG0995 (93 aa).

Belongs to the UPF0223 family.

This is UPF0223 protein SAG0995 from Streptococcus agalactiae serotype V (strain ATCC BAA-611 / 2603 V/R).